The following is a 102-amino-acid chain: Defensin-like protein 285 (102 aa).

Residues 1 to 28 (MTNLYFKTAFLLSLLLLSFSYQSKLIEA) form the signal peptide. Disulfide bonds link C39–C100, C64–C83, C70–C88, and C75–C90.

This sequence belongs to the DEFL family.

The protein resides in the secreted. The sequence is that of Defensin-like protein 285 from Arabidopsis thaliana (Mouse-ear cress).